The primary structure comprises 134 residues: Small ribosomal subunit protein uS9 (134 aa).

The disordered stretch occupies residues 114 to 134 (QKEAKNFGGPGARSKYQKSYR).

Belongs to the universal ribosomal protein uS9 family.

In Methanosarcina mazei (strain ATCC BAA-159 / DSM 3647 / Goe1 / Go1 / JCM 11833 / OCM 88) (Methanosarcina frisia), this protein is Small ribosomal subunit protein uS9.